A 1136-amino-acid chain; its full sequence is Rho GTPase-activating protein 45 (1136 aa).

Disordered stretches follow at residues 1 to 73 and 91 to 110; these read MFSR…RHAS and HRSP…GAGP. Phosphoserine occurs at positions 23, 25, 73, 93, and 99. The F-BAR domain maps to 269–539; that stretch reads EEVDVLLQRC…SSKLYDPGQQ (271 aa). Coiled-coil stretches lie at residues 376–412 and 440–499; these read EHEK…YVQR and TATK…RQSD. A phosphoserine mark is found at S569, S578, S592, and S619. The disordered stretch occupies residues 583–662; the sequence is DVARPEAAGS…SSTEELVDPD (80 aa). The span at 646-655 shows a compositional bias: low complexity; sequence TSSSGTMSST. The segment at 702-747 adopts a Phorbol-ester/DAG-type zinc-finger fold; sequence THRLRKLRTPAKCRECNSYVYFQGAECEECCLACHKKCLETLAIQC. Positions 761-974 constitute a Rho-GAP domain; the sequence is QDFSHAARSA…TLIVHYGLVF (214 aa). S949, S1027, S1030, and S1032 each carry phosphoserine. Residues 1061–1136 form a disordered region; that stretch reads EASLEVASGS…SCRERQPEFV (76 aa). A compositionally biased stretch (polar residues) spans 1095–1109; that stretch reads QQLSGFNTNQSNNVL.

As to quaternary structure, HA-1 forms a complex with MHC class I HLA-A*0201. In terms of tissue distribution, expressed on cells of the hematopoietic lineage. Detected in dendritic cells and epidermal Langerhans cells. Expressed in peripheral blood mononuclear cells, in all leukemia/lymphoma cell lines. Detected also in some solid tumors and tissues such as cancerous and non-cancerous tissue.

The protein localises to the cytoplasm. Its subcellular location is the cell projection. It localises to the ruffle membrane. Functionally, contains a GTPase activator for the Rho-type GTPases (RhoGAP) domain that would be able to negatively regulate the actin cytoskeleton as well as cell spreading. However, also contains N-terminally a BAR-domin which is able to play an autoinhibitory effect on this RhoGAP activity. In terms of biological role, precursor of the histocompatibility antigen HA-1. More generally, minor histocompatibility antigens (mHags) refer to immunogenic peptide which, when complexed with MHC, can generate an immune response after recognition by specific T-cells. The peptides are derived from polymorphic intracellular proteins, which are cleaved by normal pathways of antigen processing. The binding of these peptides to MHC class I or class II molecules and its expression on the cell surface can stimulate T-cell responses and thereby trigger graft rejection or graft-versus-host disease (GVHD) after hematopoietic stem cell transplantation from HLA-identical sibling donor. GVHD is a frequent complication after bone marrow transplantation (BMT), due to mismatch of minor histocompatibility antigen in HLA-matched sibling marrow transplants. Specifically, mismatching for mHag HA-1 which is recognized as immunodominant, is shown to be associated with the development of severe GVHD after HLA-identical BMT. HA-1 is presented to the cell surface by MHC class I HLA-A*0201, but also by other HLA-A alleles. This complex specifically elicits donor-cytotoxic T-lymphocyte (CTL) reactivity against hematologic malignancies after treatment by HLA-identical allogenic BMT. It induces cell recognition and lysis by CTL. The sequence is that of Rho GTPase-activating protein 45 from Homo sapiens (Human).